We begin with the raw amino-acid sequence, 228 residues long: Protein ARV 2 (228 aa).

The next 2 membrane-spanning stretches (helical) occupy residues 37–57 (EVAD…LILH) and 80–100 (LLWK…LLLR). N107 carries an N-linked (GlcNAc...) asparagine glycan. The next 3 membrane-spanning stretches (helical) occupy residues 123 to 143 (VLSA…LMLV), 150 to 170 (ILLT…MPVW), and 176 to 196 (VIFI…KVMT).

Belongs to the ARV1 family. Restricted to tissues in which cells are actively dividing or expanding. Mostly expressed in roots and flowers, and, to a lower extent, in stems and leaves.

The protein localises to the endoplasmic reticulum membrane. In terms of biological role, mediator of sterol homeostasis involved in sterol uptake, trafficking and distribution into membranes. Also regulates the sphingolipid metabolism. This is Protein ARV 2 from Arabidopsis thaliana (Mouse-ear cress).